We begin with the raw amino-acid sequence, 435 residues long: Homoserine dehydrogenase (435 aa).

4 residues coordinate NADPH: Thr-13, Val-14, Arg-43, and Lys-105. Val-14 contributes to the NAD(+) binding site. NADP(+)-binding residues include Val-14, Arg-43, and Lys-105. Na(+) is bound by residues Glu-129, Val-132, Gly-134, and Ile-136. Lys-204 serves as the catalytic Proton donor. Disordered stretches follow at residues 255–274 and 377–402; these read ARGV…TPDR and RCDD…PDHV. 2 stretches are compositionally biased toward basic and acidic residues: residues 262–274 and 377–391; these read RAPD…TPDR and RCDD…AERR.

It belongs to the homoserine dehydrogenase family. The cofactor is a metal cation.

The enzyme catalyses L-homoserine + NADP(+) = L-aspartate 4-semialdehyde + NADPH + H(+). It carries out the reaction L-homoserine + NAD(+) = L-aspartate 4-semialdehyde + NADH + H(+). It functions in the pathway amino-acid biosynthesis; L-methionine biosynthesis via de novo pathway; L-homoserine from L-aspartate: step 3/3. Its pathway is amino-acid biosynthesis; L-threonine biosynthesis; L-threonine from L-aspartate: step 3/5. In terms of biological role, catalyzes the conversion of L-aspartate-beta-semialdehyde (L-Asa) to L-homoserine (L-Hse), the third step in the biosynthesis of threonine and methionine from aspartate. This is Homoserine dehydrogenase (hom) from Methylobacillus glycogenes.